The chain runs to 162 residues: Early E1A 18 kDa protein (162 aa).

Positions 134-162 are disordered; the sequence is EEPTEGVAENSLKRQADSSLCSSSPKRFC. A compositionally biased stretch (polar residues) spans 150–162; the sequence is DSSLCSSSPKRFC.

The sequence is that of Early E1A 18 kDa protein from Tree shrew adenovirus serotype 1 (TSAdV-1).